The primary structure comprises 427 residues: MPSIVIVGAQWGDEGKGKIIDYLAQEADVVIRAQGGNNAGHTVMVEDKKYSFHLLPSGVLFEDKLNIIGNGVVFDPEGFLQEIEVLKKEGINTSNIKIDERVHVIFPYHKRIDQLEEEARGEAQIGTTKKGIGPCYMDKIQRSGIRLGEMIDEEDFKDRLYKQVDDKNKIIEKIYEAEGFEKEAMYETYLKYAREIKKYVTDTTILAHEALKAKKKVLFEGAQGTLLDIDLGTYPYVTSSHPTAGGFPIGAGIGPNQIEQVLGIVKAYTTRVGSGTFPTELDNEVGDKIRIKGNEFGTTTGRPRRCGWFDGVMVRYTTRINGLTAMSLMLLDVLSGFDTLKICTGYELEGEMVAHFPANIKTLGKCKPIYEELPGWEEDITNMKTYEELPENAKKYIERIESYVGVPIKMISVGPKRNQTIIRERLF.

GTP-binding positions include 12-18 and 40-42; these read GDEGKGK and GHT. The Proton acceptor role is filled by aspartate 13. Mg(2+) contacts are provided by aspartate 13 and glycine 40. IMP is bound by residues 13 to 16, 38 to 41, threonine 128, arginine 142, glutamine 223, threonine 238, and arginine 302; these read DEGK and NAGH. Histidine 41 acts as the Proton donor in catalysis. 298-304 provides a ligand contact to substrate; that stretch reads TTTGRPR. GTP-binding positions include arginine 304, 330-332, and 412-414; these read LLD and SVG.

It belongs to the adenylosuccinate synthetase family. In terms of assembly, homodimer. Mg(2+) serves as cofactor.

The protein localises to the cytoplasm. It carries out the reaction IMP + L-aspartate + GTP = N(6)-(1,2-dicarboxyethyl)-AMP + GDP + phosphate + 2 H(+). It participates in purine metabolism; AMP biosynthesis via de novo pathway; AMP from IMP: step 1/2. Its function is as follows. Plays an important role in the de novo pathway of purine nucleotide biosynthesis. Catalyzes the first committed step in the biosynthesis of AMP from IMP. This chain is Adenylosuccinate synthetase, found in Alkaliphilus metalliredigens (strain QYMF).